The chain runs to 870 residues: DNA mismatch repair protein MutS (870 aa).

ATP is bound at residue 621-628 (GPNMAGKS). The tract at residues 813 to 834 (GAPRIAKSRRQRTPDPSPQFSL) is disordered.

Belongs to the DNA mismatch repair MutS family.

In terms of biological role, this protein is involved in the repair of mismatches in DNA. It is possible that it carries out the mismatch recognition step. This protein has a weak ATPase activity. This is DNA mismatch repair protein MutS from Pelobacter propionicus (strain DSM 2379 / NBRC 103807 / OttBd1).